The sequence spans 33 residues: Photosystem II reaction center protein Psb30 (33 aa).

The chain crosses the membrane as a helical span at residues Val-5–Leu-25.

It belongs to the Psb30/Ycf12 family. PSII is composed of 1 copy each of membrane proteins PsbA, PsbB, PsbC, PsbD, PsbE, PsbF, PsbH, PsbI, PsbJ, PsbK, PsbL, PsbM, PsbT, PsbX, PsbY, PsbZ, Psb30/Ycf12, peripheral proteins of the oxygen-evolving complex and a large number of cofactors. It forms dimeric complexes.

The protein resides in the plastid. It is found in the chloroplast thylakoid membrane. Functionally, a core subunit of photosystem II (PSII), probably helps stabilize the reaction center. The sequence is that of Photosystem II reaction center protein Psb30 from Chara vulgaris (Common stonewort).